The primary structure comprises 355 residues: Uroporphyrinogen decarboxylase (355 aa).

Residues 27-31 (RQAGR), Asp-77, Tyr-154, Thr-209, and His-327 contribute to the substrate site.

It belongs to the uroporphyrinogen decarboxylase family. In terms of assembly, homodimer.

It localises to the cytoplasm. It carries out the reaction uroporphyrinogen III + 4 H(+) = coproporphyrinogen III + 4 CO2. Its pathway is porphyrin-containing compound metabolism; protoporphyrin-IX biosynthesis; coproporphyrinogen-III from 5-aminolevulinate: step 4/4. Catalyzes the decarboxylation of four acetate groups of uroporphyrinogen-III to yield coproporphyrinogen-III. The protein is Uroporphyrinogen decarboxylase of Yersinia pestis bv. Antiqua (strain Antiqua).